Reading from the N-terminus, the 521-residue chain is Occludin (521 aa).

Topologically, residues 1–66 (MSSRPFESPP…KWTSPPGVIR (66 aa)) are cytoplasmic. Residues 60–268 (SPPGVIRILS…IIFFAVKTRR (209 aa)) enclose the MARVEL domain. Residues 67–89 (ILSMLVIVMCIAIFGCVASTLAW) traverse the membrane as a helical segment. Over 90 to 134 (DRGYGTGLMGGSIGYPYGSGFGSYGTGYGYGFGYGYGYGGYTDPR) the chain is Extracellular. The chain crosses the membrane as a helical span at residues 135-159 (AAKGFLLAMVAFCFIAALVIFVTSV). Over 160-169 (IRSDISRTRR) the chain is Cytoplasmic. Residues 170–194 (YYLTVIILSAFLGVMMFIATIVYIM) traverse the membrane as a helical segment. The Extracellular segment spans residues 195–242 (GVNPTAQASGSLYSSQIYAMCNQFYASTATGLYMDQYLYHYCVVDPQE). Cys-215 and Cys-236 form a disulfide bridge. The chain crosses the membrane as a helical span at residues 243-264 (AIAIVLGFMVIVAFALIIFFAV). At 265–521 (KTRRKMDRYD…MVGDYDRQKT (257 aa)) the chain is on the cytoplasmic side. Position 301 is a phosphoserine (Ser-301). Residues 301–407 (SAGTQDMPPP…ETDYTTGGES (107 aa)) form a disordered region. Thr-304 is subject to Phosphothreonine. Phosphoserine is present on residues Ser-312, Ser-320, and Ser-339. Tyr-367 is subject to Phosphotyrosine. Phosphoserine is present on residues Ser-368 and Ser-369. Residues 380–389 (APSKGRTGRP) show a composition bias toward basic residues. Positions 390–399 (KRLEQDHYET) are enriched in basic and acidic residues. Residues Tyr-397 and Tyr-401 each carry the phosphotyrosine modification. 2 positions are modified to phosphothreonine; by PKC/PRKCH: Thr-402 and Thr-403. At Ser-407 the chain carries Phosphoserine. The 109-residue stretch at 413-521 (EDWIREYPPI…MVGDYDRQKT (109 aa)) folds into the OCEL domain. Residues 424 to 488 (SDQQRQLYKR…EYNRLKQVKG (65 aa)) adopt a coiled-coil conformation. Position 489 is a phosphoserine (Ser-489).

The protein belongs to the ELL/occludin family. As to quaternary structure, interacts with TJP1/ZO1. Interacts with VAPA. Interacts with CLDN1, CLDN6, CLDN9, CLDN11, CLDN12 and CLDN17. Interacts with PLSCR1. Interacts with LSR, ILDR1 and ILDR2. Interacts with TJP2/ZO2. Dephosphorylated by PTPRJ. Less-phosphorylated forms are found in basolateral membrane, cytosol and tight junction. More-heavily phosphorylated forms are concentrated exclusively in tight junction. In terms of tissue distribution, localized at tight junctions of both epithelial and endothelial cells.

The protein localises to the cell membrane. It is found in the cell junction. Its subcellular location is the tight junction. Its function is as follows. May play a role in the formation and regulation of the tight junction (TJ) paracellular permeability barrier. Interacts with ZO-1. The polypeptide is Occludin (OCLN) (Canis lupus familiaris (Dog)).